We begin with the raw amino-acid sequence, 364 residues long: MAGNANSVDEEVTRILGGIYLGGIRPIIDHRPLGAEFNITHILSVIKFQVIPEYLIRKGYTLKNIPIDDDDVTDVLQYFDETNRFIDQCLFPNEVEYSPRLVDFKKKPQRGAVFAHCQAGLSRSVTFIVAYLMYRYGLSLSMAMHAVKRKKPSVEPNENFMEQLHLFEKMGGDFVDFDNPAYKQWKLKQSIKLDPSGSELVSNSGMFKDSESSQDLDKLTEAEKSKVTAVRCKKCRTKLALSTSFIAHDPPSKESSEGHFIKRAANSHRIIDIQESQANCSHFFIEPLKWMQPELQGKQELEGKFSCPGCSSKVGGYNWKGSRCSCGKWVIPAIHLQTSKVDQFPLQSTALPNMVNFESEKVNR.

The 163-residue stretch at 11–173 (EVTRILGGIY…LHLFEKMGGD (163 aa)) folds into the Tyrosine-protein phosphatase domain. Cys-117 functions as the Phosphocysteine intermediate in the catalytic mechanism. A Phosphoserine modification is found at Ser-196.

The protein belongs to the protein-tyrosine phosphatase family. Non-receptor class dual specificity subfamily.

It catalyses the reaction O-phospho-L-tyrosyl-[protein] + H2O = L-tyrosyl-[protein] + phosphate. Functionally, may be directly involved in signal transduction and/or cell cycle regulation. It is necessary for maintaining growth rate or spore germination. Could show both activity toward tyrosine-protein phosphate as well as with serine-protein phosphate. The chain is Tyrosine-protein phosphatase YVH1 (YVH1) from Saccharomyces cerevisiae (strain ATCC 204508 / S288c) (Baker's yeast).